The chain runs to 335 residues: Probable cytosolic iron-sulfur protein assembly protein Ciao1 (335 aa).

7 WD repeats span residues 12–51 (GHKG…WSTK), 57–96 (GHKR…FECN), 101–140 (GHEN…EFEC), 146–185 (SHTQ…NDWD), 192–231 (SHTS…NSAG), 250–289 (QHSR…KPDE), and 301–335 (AHDQ…KVTE).

Belongs to the WD repeat CIA1 family.

Functionally, essential component of the cytosolic iron-sulfur (Fe/S) protein assembly machinery. Required for the maturation of extramitochondrial Fe/S proteins. This Drosophila yakuba (Fruit fly) protein is Probable cytosolic iron-sulfur protein assembly protein Ciao1.